Here is a 472-residue protein sequence, read N- to C-terminus: ATP synthase subunit beta (472 aa).

Position 157–164 (157–164 (GGAGVGKT)) interacts with ATP.

It belongs to the ATPase alpha/beta chains family. In terms of assembly, F-type ATPases have 2 components, CF(1) - the catalytic core - and CF(0) - the membrane proton channel. CF(1) has five subunits: alpha(3), beta(3), gamma(1), delta(1), epsilon(1). CF(0) has three main subunits: a(1), b(2) and c(9-12). The alpha and beta chains form an alternating ring which encloses part of the gamma chain. CF(1) is attached to CF(0) by a central stalk formed by the gamma and epsilon chains, while a peripheral stalk is formed by the delta and b chains.

Its subcellular location is the cell membrane. The catalysed reaction is ATP + H2O + 4 H(+)(in) = ADP + phosphate + 5 H(+)(out). Its function is as follows. Produces ATP from ADP in the presence of a proton gradient across the membrane. The catalytic sites are hosted primarily by the beta subunits. This chain is ATP synthase subunit beta, found in Desulforudis audaxviator (strain MP104C).